Reading from the N-terminus, the 552-residue chain is Non-structural protein NS1 (552 aa).

The protein belongs to the orbivirus non-structural protein NS1 family.

This chain is Non-structural protein NS1 (Segment-5), found in Antilocapra americana (Pronghorn).